An 848-amino-acid polypeptide reads, in one-letter code: Aryl hydrocarbon receptor (848 aa).

The residue at position 1 (M1) is an N-acetylmethionine. A propeptide spanning residues 1 to 10 (MNSSSANITY) is cleaved from the precursor. Over residues 1–10 (MNSSSANITY) the composition is skewed to polar residues. The disordered stretch occupies residues 1–39 (MNSSSANITYASRKRRKPVQKTVKPIPAEGIKSNPSKRH). 2 short sequence motifs (nuclear localization signal) span residues 13 to 16 (RKRR) and 37 to 42 (KRHRDR). In terms of domain architecture, bHLH spans 27 to 80 (PAEGIKSNPSKRHRDRLNTELDRLASLLPFPQDVINKLDKLSVLRLSVSYLRAK). The DNA-binding stretch occupies residues 38–66 (RHRDRLNTELDRLASLLPFPQDVINKLDK). Required for maintaining the overall integrity of the AHR:ARNT heterodimer and its transcriptional activity stretches follow at residues 50-82 (LASLLPFPQDVINKLDKLSVLRLSVSYLRAKSF), 118-126 (LLQALNGFV), and 266-268 (FAI). Positions 64–72 (LDKLSVLRL) match the Nuclear export signal motif. Positions 111–181 (NLQEGEFLLQ…RQLHWALNPS (71 aa)) constitute a PAS 1 domain. Positions 275 to 342 (PSILEIRTKN…CAESHIRMIK (68 aa)) constitute a PAS 2 domain. A PAC domain is found at 348–386 (MIVFRLLTKNNRWTWVQSNARLLYKNGRPDYIIVTQRPL). Positions 824–848 (TTHLQPLHHPSEARPFPDLTSSGFL) are disordered.

Homodimer. Heterodimer; efficient DNA binding requires dimerization with another bHLH protein. Interacts with ARNT; the heterodimer ARNT:AHR binds to core DNA sequence 5'-TGCGTG-3' within the dioxin response element (DRE) of target gene promoters and activates their transcription. Binds MYBBP1A. Interacts with coactivators including SRC-1, RIP140 and NOCA7, and with the corepressor SMRT. Interacts with NEDD8 and IVNS1ABP. Interacts with BMAL1. Interacts with HSP90AB1. Interacts with TIPARP; leading to mono-ADP-ribosylation of AHR and subsequent inhibition of AHR. In terms of processing, mono-ADP-ribosylated, leading to inhibit transcription activator activity of AHR. In terms of tissue distribution, expressed in all tissues tested including blood, brain, heart, kidney, liver, lung, pancreas and skeletal muscle. Expressed in retinal photoreceptors.

It localises to the cytoplasm. The protein localises to the nucleus. Its function is as follows. Ligand-activated transcription factor that enables cells to adapt to changing conditions by sensing compounds from the environment, diet, microbiome and cellular metabolism, and which plays important roles in development, immunity and cancer. Upon ligand binding, translocates into the nucleus, where it heterodimerizes with ARNT and induces transcription by binding to xenobiotic response elements (XRE). Regulates a variety of biological processes, including angiogenesis, hematopoiesis, drug and lipid metabolism, cell motility and immune modulation. Xenobiotics can act as ligands: upon xenobiotic-binding, activates the expression of multiple phase I and II xenobiotic chemical metabolizing enzyme genes (such as the CYP1A1 gene). Mediates biochemical and toxic effects of halogenated aromatic hydrocarbons. Next to xenobiotics, natural ligands derived from plants, microbiota, and endogenous metabolism are potent AHR agonists. Tryptophan (Trp) derivatives constitute an important class of endogenous AHR ligands. Acts as a negative regulator of anti-tumor immunity: indoles and kynurenic acid generated by Trp catabolism act as ligand and activate AHR, thereby promoting AHR-driven cancer cell motility and suppressing adaptive immunity. Regulates the circadian clock by inhibiting the basal and circadian expression of the core circadian component PER1. Inhibits PER1 by repressing the CLOCK-BMAL1 heterodimer mediated transcriptional activation of PER1. The heterodimer ARNT:AHR binds to core DNA sequence 5'-TGCGTG-3' within the dioxin response element (DRE) of target gene promoters and activates their transcription. The chain is Aryl hydrocarbon receptor from Homo sapiens (Human).